The chain runs to 663 residues: Alcohol oxidase (663 aa).

Position 8-39 (8-39 (DVIVCGGGSTGCVIAGRLANVDENLKVLLIEN)) interacts with FAD. The Proton acceptor role is filled by histidine 567. Positions 661–663 (ARY) match the Microbody targeting signal motif.

It belongs to the GMC oxidoreductase family. As to quaternary structure, homooctamer. FAD is required as a cofactor.

It localises to the peroxisome matrix. The catalysed reaction is a primary alcohol + O2 = an aldehyde + H2O2. Its pathway is energy metabolism; methane degradation. Functionally, catalyzes the oxidation of methanol to formaldehyde and hydrogen peroxide, the first step in the methanol utilization pathway of methylotrophic yeasts. The sequence is that of Alcohol oxidase (AOD1) from Candida boidinii (Yeast).